A 297-amino-acid chain; its full sequence is TATA-box-binding protein (297 aa).

The interval Glu52 to Ser116 is disordered. Composition is skewed to low complexity over residues Arg56–Gln78 and Met104–Ser114. 2 repeat units span residues Leu123–Val199 and Ile213–Leu290.

Belongs to the TBP family. In terms of assembly, belongs to the TFIID complex together with the TBP-associated factors (TAFs). Binds DNA as monomer. Post-translationally, the N-terminal domain is extensively phosphorylated.

It localises to the nucleus. General transcription factor that functions at the core of the DNA-binding multiprotein factor TFIID. Binding of TFIID to the TATA box is the initial transcriptional step of the pre-initiation complex (PIC), playing a role in the activation of eukaryotic genes transcribed by RNA polymerase II. Members of the TBP family are differentially required to regulate transcription and development during early embryogenesis. Binds to the promoters of select genes. This Xenopus tropicalis (Western clawed frog) protein is TATA-box-binding protein.